The following is a 193-amino-acid chain: Large ribosomal subunit protein uL18 (193 aa).

Belongs to the universal ribosomal protein uL18 family. As to quaternary structure, part of the 50S ribosomal subunit. Contacts the 5S and 23S rRNAs.

Functionally, this is one of the proteins that bind and probably mediate the attachment of the 5S RNA into the large ribosomal subunit, where it forms part of the central protuberance. This is Large ribosomal subunit protein uL18 from Methanobrevibacter smithii (strain ATCC 35061 / DSM 861 / OCM 144 / PS).